Consider the following 316-residue polypeptide: Ribosomal RNA small subunit methyltransferase H (316 aa).

S-adenosyl-L-methionine-binding positions include 35-37 (GGH), D55, F79, D101, and Q108.

This sequence belongs to the methyltransferase superfamily. RsmH family.

The protein resides in the cytoplasm. It carries out the reaction cytidine(1402) in 16S rRNA + S-adenosyl-L-methionine = N(4)-methylcytidine(1402) in 16S rRNA + S-adenosyl-L-homocysteine + H(+). In terms of biological role, specifically methylates the N4 position of cytidine in position 1402 (C1402) of 16S rRNA. This is Ribosomal RNA small subunit methyltransferase H from Vibrio proteolyticus (Aeromonas proteolytica).